A 152-amino-acid chain; its full sequence is UPF0178 protein NIS_0137 (152 aa).

The protein belongs to the UPF0178 family.

This chain is UPF0178 protein NIS_0137, found in Nitratiruptor sp. (strain SB155-2).